Consider the following 290-residue polypeptide: MSVKPTKQKPGEPPTTGHSWDGIEEFDNPMPRWWLWTFYVTIVWAIGYSILYPAWPLINGATNGLIGHSTRADVQRDIEAFAEANATIRQQLVNTDLTAIAADPNLLQYATNAGAAVFRTNCVQCHGSGAAGNVGYPNLLDDDWLWGGDIESIHTTVTHGIRNTTDDEARYSEMPRFGADGLLDSTQISQVVEYVLQISGQDHDAALSAEGATIFADNCAACHGEDGTGSRDVGAPNLTDAIWLYGGDRATVTETVTYARFGVMPNWNARLTEADIRSVAVYVHGLGGGE.

The segment at 1–22 (MSVKPTKQKPGEPPTTGHSWDG) is disordered. Residues 1–37 (MSVKPTKQKPGEPPTTGHSWDGIEEFDNPMPRWWLWT) lie on the Cytoplasmic side of the membrane. The chain crosses the membrane as a helical span at residues 38 to 58 (FYVTIVWAIGYSILYPAWPLI). Residues 59–290 (NGATNGLIGH…VYVHGLGGGE (232 aa)) are Periplasmic-facing. Cytochrome c domains lie at 109–199 (YATN…LQIS) and 206–287 (ALSA…HGLG). Positions 122, 125, 126, 174, 219, 222, 223, and 264 each coordinate heme c.

This sequence belongs to the CcoP / FixP family. Component of the cbb3-type cytochrome c oxidase at least composed of CcoN, CcoO, CcoQ and CcoP. It depends on heme c as a cofactor.

The protein localises to the cell inner membrane. It functions in the pathway energy metabolism; oxidative phosphorylation. Functionally, C-type cytochrome. Part of the cbb3-type cytochrome c oxidase complex. CcoP subunit is required for transferring electrons from donor cytochrome c via its heme groups to CcoO subunit. From there, electrons are shuttled to the catalytic binuclear center of CcoN subunit where oxygen reduction takes place. The complex also functions as a proton pump. The protein is Cbb3-type cytochrome c oxidase subunit CcoP of Cereibacter sphaeroides (strain ATCC 17023 / DSM 158 / JCM 6121 / CCUG 31486 / LMG 2827 / NBRC 12203 / NCIMB 8253 / ATH 2.4.1.) (Rhodobacter sphaeroides).